Consider the following 199-residue polypeptide: Patulin biosynthesis cluster protein F (199 aa).

A signal peptide spans 1–21 (MKSSLWVSLAVSLIGLGPAAA). N-linked (GlcNAc...) asparagine glycans are attached at residues asparagine 129 and asparagine 183.

It belongs to the patF family.

It is found in the cytoplasm. It localises to the cytosol. The catalysed reaction is phyllostine = neopatulin. It functions in the pathway mycotoxin biosynthesis; patulin biosynthesis. In terms of biological role, part of the gene cluster that mediates the biosynthesis of patulin, an acetate-derived tetraketide mycotoxin produced by several fungal species that shows antimicrobial properties against several bacteria. PatF catalyzes the conversion of phyllostine into neopatulin. The pathway begins with the synthesis of 6-methylsalicylic acid by the polyketide synthase (PKS) patK via condensation of acetate and malonate units. The 6-methylsalicylic acid decarboxylase patG then catalyzes the decarboxylation of 6-methylsalicylic acid to yield m-cresol (also known as 3-methylphenol). These first reactions occur in the cytosol. The intermediate m-cresol is then transported into the endoplasmic reticulum where the cytochrome P450 monooxygenase patH converts it to m-hydroxybenzyl alcohol, which is further converted to gentisyl alcohol by the cytochrome P450 monooxygenase patI. The oxidoreductases patJ and patO further convert gentisyl alcohol to isoepoxydon in the vacuole. PatN catalyzes then the transformation of isoepoxydon into phyllostine. The cluster protein patF is responsible for the conversion from phyllostine to neopatulin whereas the alcohol dehydrogenase patD converts neopatulin to E-ascladiol. The steps between isoepoxydon and E-ascladiol occur in the cytosol, and E-ascladiol is probably secreted to the extracellular space by one of the cluster-specific transporters patC or patM. Finally, the secreted patulin synthase patE catalyzes the conversion of E-ascladiol to patulin. The polypeptide is Patulin biosynthesis cluster protein F (Penicillium expansum (Blue mold rot fungus)).